The primary structure comprises 483 residues: Altronate oxidoreductase (483 aa).

18 to 29 (IIQFGEGNFLRA) contributes to the NAD(+) binding site.

Belongs to the mannitol dehydrogenase family. UxaB subfamily.

The enzyme catalyses D-altronate + NAD(+) = keto-D-tagaturonate + NADH + H(+). It participates in carbohydrate metabolism; pentose and glucuronate interconversion. The chain is Altronate oxidoreductase from Escherichia coli O6:K15:H31 (strain 536 / UPEC).